The chain runs to 101 residues: Interleukin-8 (101 aa).

The N-terminal stretch at 1–22 (MTSKLAVALLAAFLLSAALCEA) is a signal peptide. The residue at position 27 (Arg-27) is a Citrulline. 2 cysteine pairs are disulfide-bonded: Cys-34/Cys-61 and Cys-36/Cys-77.

It belongs to the intercrine alpha (chemokine CxC) family. As to quaternary structure, homodimer. Interacts with TNFAIP6 (via Link domain); this interaction interferes with chemokine binding to glycosaminoglycans. Post-translationally, citrullination at Arg-27 prevents proteolysis, and dampens tissue inflammation, it also enhances leukocytosis, possibly through impaired chemokine clearance from the blood circulation.

It is found in the secreted. Its function is as follows. Chemotactic factor that mediates inflammatory response by attracting neutrophils, basophils, and T-cells to clear pathogens and protect the host from infection. Also plays an important role in neutrophil activation. Released in response to an inflammatory stimulus, exerts its effect by binding to the G-protein-coupled receptors CXCR1 and CXCR2, primarily found in neutrophils, monocytes and endothelial cells. G-protein heterotrimer (alpha, beta, gamma subunits) constitutively binds to CXCR1/CXCR2 receptor and activation by IL8 leads to beta and gamma subunits release from Galpha (GNAI2 in neutrophils) and activation of several downstream signaling pathways including PI3K and MAPK pathways. The chain is Interleukin-8 (CXCL8) from Ovis aries (Sheep).